Reading from the N-terminus, the 140-residue chain is Probable lipoprotein LppE (140 aa).

The N-terminal stretch at 1 to 21 (MCNRLVTVTGVAMVVAAGLSA) is a signal peptide. Cys22 carries the N-palmitoyl cysteine lipid modification. A lipid anchor (S-diacylglycerol cysteine) is attached at Cys22.

The protein belongs to the mycobacterial 19 kDa antigen family.

It localises to the cell membrane. The protein is Probable lipoprotein LppE (lppE) of Mycobacterium tuberculosis (strain ATCC 25618 / H37Rv).